We begin with the raw amino-acid sequence, 338 residues long: Glycerol-3-phosphate dehydrogenase [NAD(P)+] (338 aa).

Residues S13, W14, and K108 each coordinate NADPH. 3 residues coordinate sn-glycerol 3-phosphate: K108, G139, and S141. An NADPH-binding site is contributed by A143. Sn-glycerol 3-phosphate contacts are provided by K194, D247, S257, R258, and N259. K194 (proton acceptor) is an active-site residue. R258 provides a ligand contact to NADPH. 2 residues coordinate NADPH: V282 and E284.

This sequence belongs to the NAD-dependent glycerol-3-phosphate dehydrogenase family.

Its subcellular location is the cytoplasm. The enzyme catalyses sn-glycerol 3-phosphate + NAD(+) = dihydroxyacetone phosphate + NADH + H(+). It carries out the reaction sn-glycerol 3-phosphate + NADP(+) = dihydroxyacetone phosphate + NADPH + H(+). The protein operates within membrane lipid metabolism; glycerophospholipid metabolism. Functionally, catalyzes the reduction of the glycolytic intermediate dihydroxyacetone phosphate (DHAP) to sn-glycerol 3-phosphate (G3P), the key precursor for phospholipid synthesis. This Streptococcus suis (strain 98HAH33) protein is Glycerol-3-phosphate dehydrogenase [NAD(P)+].